We begin with the raw amino-acid sequence, 152 residues long: Xanthine-guanine phosphoribosyltransferase (152 aa).

Residues 37–38 (RG), Arg69, and 88–96 (DDLVDTGGT) each bind 5-phospho-alpha-D-ribose 1-diphosphate. Position 69 (Arg69) interacts with GMP. Mg(2+) is bound at residue Asp89. Guanine-binding residues include Asp92 and Ile135. Xanthine is bound by residues Asp92 and Ile135. Residues 92–96 (DTGGT) and 134–135 (WI) contribute to the GMP site.

It belongs to the purine/pyrimidine phosphoribosyltransferase family. XGPT subfamily. As to quaternary structure, homotetramer. The cofactor is Mg(2+).

It localises to the cell inner membrane. The enzyme catalyses GMP + diphosphate = guanine + 5-phospho-alpha-D-ribose 1-diphosphate. It catalyses the reaction XMP + diphosphate = xanthine + 5-phospho-alpha-D-ribose 1-diphosphate. It carries out the reaction IMP + diphosphate = hypoxanthine + 5-phospho-alpha-D-ribose 1-diphosphate. Its pathway is purine metabolism; GMP biosynthesis via salvage pathway; GMP from guanine: step 1/1. It participates in purine metabolism; XMP biosynthesis via salvage pathway; XMP from xanthine: step 1/1. Purine salvage pathway enzyme that catalyzes the transfer of the ribosyl-5-phosphate group from 5-phospho-alpha-D-ribose 1-diphosphate (PRPP) to the N9 position of the 6-oxopurines guanine and xanthine to form the corresponding ribonucleotides GMP (guanosine 5'-monophosphate) and XMP (xanthosine 5'-monophosphate), with the release of PPi. To a lesser extent, also acts on hypoxanthine. The sequence is that of Xanthine-guanine phosphoribosyltransferase from Escherichia coli O127:H6 (strain E2348/69 / EPEC).